Consider the following 59-residue polypeptide: Large ribosomal subunit protein uL30 (59 aa).

The protein belongs to the universal ribosomal protein uL30 family. Part of the 50S ribosomal subunit.

The polypeptide is Large ribosomal subunit protein uL30 (Enterobacter sp. (strain 638)).